The following is a 461-amino-acid chain: Protein FAM124B (461 aa).

Residue Ser49 is modified to Phosphoserine. A disordered region spans residues 302–346 (VELPEPGGRPVSDGSSNTWWKSAGGSAQPSSPATESQPQLSSLHL). The span at 323–334 (SAGGSAQPSSPA) shows a compositional bias: low complexity.

This sequence belongs to the FAM124 family. Interacts with CHD7 and CHD8.

The protein localises to the nucleus. In Bos taurus (Bovine), this protein is Protein FAM124B (FAM124B).